The primary structure comprises 448 residues: Potassium/proton antiporter CemA (448 aa).

4 helical membrane-spanning segments follow: residues 47–67 (IVFYTNTGLNNCIFKIYLSLL), 213–233 (LSSLQYIGCLISIPSIISTLF), 314–334 (IISHSLTDIIYLITLSGLFVA), and 395–415 (IISCSVSTFPVVLDTVLKYLI).

The protein belongs to the CemA family.

The protein resides in the plastid membrane. The catalysed reaction is K(+)(in) + H(+)(out) = K(+)(out) + H(+)(in). Its function is as follows. May be involved in proton extrusion. The polypeptide is Potassium/proton antiporter CemA (Aneura mirabilis (Parasitic liverwort)).